We begin with the raw amino-acid sequence, 377 residues long: Actin-related protein T2 (377 aa).

It belongs to the actin family.

It localises to the cytoplasm. It is found in the cytoskeleton. The sequence is that of Actin-related protein T2 (ACTRT2) from Macaca fascicularis (Crab-eating macaque).